A 417-amino-acid chain; its full sequence is NADH-quinone oxidoreductase subunit D (417 aa).

This sequence belongs to the complex I 49 kDa subunit family. NDH-1 is composed of 14 different subunits. Subunits NuoB, C, D, E, F, and G constitute the peripheral sector of the complex.

The protein localises to the cell inner membrane. It catalyses the reaction a quinone + NADH + 5 H(+)(in) = a quinol + NAD(+) + 4 H(+)(out). Its function is as follows. NDH-1 shuttles electrons from NADH, via FMN and iron-sulfur (Fe-S) centers, to quinones in the respiratory chain. The immediate electron acceptor for the enzyme in this species is believed to be ubiquinone. Couples the redox reaction to proton translocation (for every two electrons transferred, four hydrogen ions are translocated across the cytoplasmic membrane), and thus conserves the redox energy in a proton gradient. This chain is NADH-quinone oxidoreductase subunit D, found in Burkholderia mallei (strain NCTC 10247).